The primary structure comprises 393 residues: S-adenosylmethionine synthase 1 (393 aa).

Glutamate 9 provides a ligand contact to Mg(2+). Residue histidine 15 coordinates ATP. Position 43 (glutamate 43) interacts with K(+). 2 residues coordinate L-methionine: glutamate 56 and glutamine 99. Residues 167–169 (DGK), 235–238 (SGRF), aspartate 246, 252–253 (RK), alanine 269, lysine 273, and lysine 277 contribute to the ATP site. Aspartate 246 contributes to the L-methionine binding site. Residue lysine 277 coordinates L-methionine.

The protein belongs to the AdoMet synthase family. In terms of assembly, homotetramer. It depends on Mn(2+) as a cofactor. Mg(2+) serves as cofactor. Co(2+) is required as a cofactor. The cofactor is K(+).

It localises to the cytoplasm. The catalysed reaction is L-methionine + ATP + H2O = S-adenosyl-L-methionine + phosphate + diphosphate. It functions in the pathway amino-acid biosynthesis; S-adenosyl-L-methionine biosynthesis; S-adenosyl-L-methionine from L-methionine: step 1/1. Its function is as follows. Catalyzes the formation of S-adenosylmethionine from methionine and ATP. The reaction comprises two steps that are both catalyzed by the same enzyme: formation of S-adenosylmethionine (AdoMet) and triphosphate, and subsequent hydrolysis of the triphosphate. The protein is S-adenosylmethionine synthase 1 (METK1) of Picea sitchensis (Sitka spruce).